Here is a 187-residue protein sequence, read N- to C-terminus: Homeobox protein engrailed-like ceh-16 (187 aa).

Disordered regions lie at residues proline 14–proline 43, serine 60–aspartate 100, and lysine 144–isoleucine 167. Over residues proline 20 to proline 39 the composition is skewed to low complexity. The segment at residues glutamate 87–threonine 146 is a DNA-binding region (homeobox). A compositionally biased stretch (polar residues) spans serine 145–asparagine 163.

It belongs to the engrailed homeobox family. As to expression, expressed in seam cells.

The protein resides in the nucleus. Its subcellular location is the cytoplasm. Transcriptional regulator which binds to DNA to regulate gene expression and promote seam cell development and differentiation during embryogenesis. Plays a role in maintaining the boundaries between the lateral rows of seam cells and the ventral and dorsal row of epidermal cells during embryonic development. Negatively regulates the expression of the fusion effector protein eff-1 to prevent seam cell fusion with the dorsal and ventral epidermal cells during embryonic elongation. Positively regulates seam cell self-renewal and expansion during the L2 larval stage to promote seam cell development. This role does not seem to be via regulation of eff-1 expression. Specifically, it is required for the asymmetric division of the V5.p seam cell during the L2 larval stage, and in turn the asymmetric nuclear distribution of pop-1 in V5.p daughter cells. The protein is Homeobox protein engrailed-like ceh-16 of Caenorhabditis elegans.